The sequence spans 454 residues: Tryptophanase (454 aa).

N6-(pyridoxal phosphate)lysine is present on K256.

Belongs to the beta-eliminating lyase family. In terms of assembly, homotetramer. Pyridoxal 5'-phosphate serves as cofactor.

It carries out the reaction L-tryptophan + H2O = indole + pyruvate + NH4(+). The protein operates within amino-acid degradation; L-tryptophan degradation via pyruvate pathway; indole and pyruvate from L-tryptophan: step 1/1. This chain is Tryptophanase (tnaA), found in Rhodobacter capsulatus (Rhodopseudomonas capsulata).